We begin with the raw amino-acid sequence, 120 residues long: Large ribosomal subunit protein uL18 (120 aa).

The protein belongs to the universal ribosomal protein uL18 family. As to quaternary structure, part of the 50S ribosomal subunit; part of the 5S rRNA/L5/L18/L25 subcomplex. Contacts the 5S and 23S rRNAs.

This is one of the proteins that bind and probably mediate the attachment of the 5S RNA into the large ribosomal subunit, where it forms part of the central protuberance. This Oleidesulfovibrio alaskensis (strain ATCC BAA-1058 / DSM 17464 / G20) (Desulfovibrio alaskensis) protein is Large ribosomal subunit protein uL18.